Here is a 273-residue protein sequence, read N- to C-terminus: HMP-PP phosphatase (273 aa).

Asp-8 acts as the Nucleophile in catalysis. Positions 8, 10, and 212 each coordinate Mg(2+).

This sequence belongs to the HAD-like hydrolase superfamily. Cof family. Mg(2+) is required as a cofactor.

It carries out the reaction 4-amino-2-methyl-5-(diphosphooxymethyl)pyrimidine + H2O = 4-amino-2-methyl-5-(phosphooxymethyl)pyrimidine + phosphate + H(+). Functionally, catalyzes the hydrolysis of 4-amino-2-methyl-5-hydroxymethylpyrimidine pyrophosphate (HMP-PP) to 4-amino-2-methyl-5-hydroxymethylpyrimidine phosphate (HMP-P). The polypeptide is HMP-PP phosphatase (Yersinia pseudotuberculosis serotype IB (strain PB1/+)).